The chain runs to 205 residues: Glycerol-3-phosphate acyltransferase (205 aa).

Residues 1–3 (MSA) lie on the Periplasmic side of the membrane. Residues 4–24 (IAPGMILIAYLCGSISSAILV) traverse the membrane as a helical segment. Residues 25 to 52 (CRLCGLPDPRTSGSGNPGATNVLRIGGK) lie on the Cytoplasmic side of the membrane. The helical transmembrane segment at 53–73 (GAAVAVLIFDVLKGMLPVWGA) threads the bilayer. Over 74–80 (YELGVSP) the chain is Periplasmic. A helical transmembrane segment spans residues 81–101 (FWLGLIAIAACLGHIWPVFFG). The Cytoplasmic portion of the chain corresponds to 102–111 (FKGGKGVATA). A helical transmembrane segment spans residues 112-132 (FGAIAPIGWDLTGVMAGTWLL). Residues 133–137 (TVLLS) are Periplasmic-facing. The helical transmembrane segment at 138-158 (GYSSLGAIVSALIAPFYVWWF) threads the bilayer. Topologically, residues 159–205 (KPQFTFPVSMLSCLILLRHHDNIQRLWRRQETKIWTKFKRKREKDPE) are cytoplasmic.

The protein belongs to the PlsY family. As to quaternary structure, probably interacts with PlsX.

It localises to the cell inner membrane. It carries out the reaction sn-glycerol 3-phosphate + an acyl-CoA = a 1-acyl-sn-glycero-3-phosphate + CoA. It catalyses the reaction a fatty acyl-[ACP] + sn-glycerol 3-phosphate = a 1-acyl-sn-glycero-3-phosphate + holo-[ACP]. It functions in the pathway lipid metabolism; phospholipid metabolism. In terms of biological role, catalyzes the transfer of an acyl group from acyl-ACP to glycerol-3-phosphate (G3P) to form lysophosphatidic acid (LPA). This enzyme can also utilize acyl-CoA as fatty acyl donor, but not acyl-PO(4). The protein is Glycerol-3-phosphate acyltransferase of Escherichia coli O8 (strain IAI1).